Reading from the N-terminus, the 155-residue chain is 6,7-dimethyl-8-ribityllumazine synthase (155 aa).

5-amino-6-(D-ribitylamino)uracil-binding positions include Trp22, 56 to 58, and 80 to 82; these read SYE and AVI. 85–86 contributes to the (2S)-2-hydroxy-3-oxobutyl phosphate binding site; that stretch reads DT. The active-site Proton donor is the His88. Residue Phe113 coordinates 5-amino-6-(D-ribitylamino)uracil. (2S)-2-hydroxy-3-oxobutyl phosphate is bound at residue Arg127.

This sequence belongs to the DMRL synthase family.

The catalysed reaction is (2S)-2-hydroxy-3-oxobutyl phosphate + 5-amino-6-(D-ribitylamino)uracil = 6,7-dimethyl-8-(1-D-ribityl)lumazine + phosphate + 2 H2O + H(+). The protein operates within cofactor biosynthesis; riboflavin biosynthesis; riboflavin from 2-hydroxy-3-oxobutyl phosphate and 5-amino-6-(D-ribitylamino)uracil: step 1/2. Catalyzes the formation of 6,7-dimethyl-8-ribityllumazine by condensation of 5-amino-6-(D-ribitylamino)uracil with 3,4-dihydroxy-2-butanone 4-phosphate. This is the penultimate step in the biosynthesis of riboflavin. The sequence is that of 6,7-dimethyl-8-ribityllumazine synthase from Deinococcus radiodurans (strain ATCC 13939 / DSM 20539 / JCM 16871 / CCUG 27074 / LMG 4051 / NBRC 15346 / NCIMB 9279 / VKM B-1422 / R1).